Here is an 82-residue protein sequence, read N- to C-terminus: Sulfur carrier protein TusA (82 aa).

The active-site Cysteine persulfide intermediate is the cysteine 17.

This sequence belongs to the sulfur carrier protein TusA family.

Its subcellular location is the cytoplasm. Functionally, sulfur carrier protein which probably makes part of a sulfur-relay system. In Glaesserella parasuis serovar 5 (strain SH0165) (Haemophilus parasuis), this protein is Sulfur carrier protein TusA.